The primary structure comprises 325 residues: tRNA(Ile)-lysidine synthase (325 aa).

Position 35 to 40 (35 to 40 (SGGQDS)) interacts with ATP.

The protein belongs to the tRNA(Ile)-lysidine synthase family.

The protein resides in the cytoplasm. It catalyses the reaction cytidine(34) in tRNA(Ile2) + L-lysine + ATP = lysidine(34) in tRNA(Ile2) + AMP + diphosphate + H(+). Functionally, ligates lysine onto the cytidine present at position 34 of the AUA codon-specific tRNA(Ile) that contains the anticodon CAU, in an ATP-dependent manner. Cytidine is converted to lysidine, thus changing the amino acid specificity of the tRNA from methionine to isoleucine. The polypeptide is tRNA(Ile)-lysidine synthase (Gloeobacter violaceus (strain ATCC 29082 / PCC 7421)).